Here is a 279-residue protein sequence, read N- to C-terminus: Protein phosphatase 1 regulatory subunit 3E (279 aa).

2 positions are modified to phosphoserine: Ser-16 and Ser-33. A disordered region spans residues 28-89 (RSQRPSLEEE…RSPDTRKRVR (62 aa)). Positions 51-65 (ARSRAHVPGRGRRAR) are enriched in basic residues. Phosphoserine is present on Ser-66. A PP1-binding motif motif is present at residues 87–90 (RVRF). One can recognise a CBM21 domain in the interval 154 to 259 (AARLQAQRIC…NNGGRDYALL (106 aa)). The interval 176 to 198 (GSARVLDLAYEKRVSVRWSADGW) is glycogen-binding motif. The substrate-binding motif stretch occupies residues 248–256 (WDNNGGRDY).

Expressed in liver and heart, with low levels in skeletal muscle.

Functionally, acts as a glycogen-targeting subunit for PP1. PP1 is involved in glycogen metabolism and contributes to the activation of glycogen synthase leading to an increase in glycogen synthesis. The polypeptide is Protein phosphatase 1 regulatory subunit 3E (Ppp1r3e) (Rattus norvegicus (Rat)).